The sequence spans 413 residues: Ferredoxin--NADP reductase (413 aa).

Methionine 1 carries the post-translational modification N-acetylmethionine. The CpcD-like domain occupies 18–76 (NRLFVYEVIGLSQSTMTDGLDYPIRRSGSTFITVPLKRMNQEMRRITRMGGKIVSIKPL). The segment at 74 to 120 (KPLEGDSPLPHTEGIAKPSQSEGSGSEAVANPAPESNKTMTTTPKEK) is disordered. The span at 107-116 (PESNKTMTTT) shows a compositional bias: polar residues. Residues 133–256 (KTPYIGKVLE…TGPVGKEMLL (124 aa)) enclose the FAD-binding FR-type domain. FAD is bound by residues 192–195 (RLYS), 213–215 (CVR), tyrosine 219, 230–232 (VCS), and threonine 271. Positions 195 and 215 each coordinate NADP(+). NADP(+)-binding positions include threonine 271, 303–304 (IP), 333–334 (SR), 343–347 (RMYIQ), 372–373 (GL), and glutamate 411.

This sequence belongs to the ferredoxin--NADP reductase type 1 family. Purifies with both the classic phycobilisome (PBS) supercomplex (CpcG-PBS) and a photosystem I-associated PBS called CpcL-PBS; it accumulates to a higher level in CpcL-PBS. In both PBS it can be cross-linked to both phycocyanin subunits. The cofactor is FAD. In terms of processing, acetylated at the N-terminus; 6% of protein in CpcG-PBS and 12% of protein in CpcL-PBS is acetylated.

Its subcellular location is the cellular thylakoid membrane. The catalysed reaction is 2 reduced [2Fe-2S]-[ferredoxin] + NADP(+) + H(+) = 2 oxidized [2Fe-2S]-[ferredoxin] + NADPH. The chain is Ferredoxin--NADP reductase from Synechocystis sp. (strain ATCC 27184 / PCC 6803 / Kazusa).